Reading from the N-terminus, the 200-residue chain is Holliday junction branch migration complex subunit RuvA (200 aa).

Residues 1–63 (MIASVRGVVT…EDSLTLYGFA (63 aa)) are domain I. The segment at 64–142 (DDDAKALFEL…PVPVGADSAA (79 aa)) is domain II. Residues 143 to 151 (GVTTGAWPE) form a flexible linker region. Residues 151–200 (EQVRQALVGLGWTAAQADQAVTAVAETVDGAVPPVPVLLRQAIRLLGRTR) form a domain III region.

The protein belongs to the RuvA family. As to quaternary structure, homotetramer. Forms an RuvA(8)-RuvB(12)-Holliday junction (HJ) complex. HJ DNA is sandwiched between 2 RuvA tetramers; dsDNA enters through RuvA and exits via RuvB. An RuvB hexamer assembles on each DNA strand where it exits the tetramer. Each RuvB hexamer is contacted by two RuvA subunits (via domain III) on 2 adjacent RuvB subunits; this complex drives branch migration. In the full resolvosome a probable DNA-RuvA(4)-RuvB(12)-RuvC(2) complex forms which resolves the HJ.

The protein localises to the cytoplasm. Functionally, the RuvA-RuvB-RuvC complex processes Holliday junction (HJ) DNA during genetic recombination and DNA repair, while the RuvA-RuvB complex plays an important role in the rescue of blocked DNA replication forks via replication fork reversal (RFR). RuvA specifically binds to HJ cruciform DNA, conferring on it an open structure. The RuvB hexamer acts as an ATP-dependent pump, pulling dsDNA into and through the RuvAB complex. HJ branch migration allows RuvC to scan DNA until it finds its consensus sequence, where it cleaves and resolves the cruciform DNA. The sequence is that of Holliday junction branch migration complex subunit RuvA from Salinispora tropica (strain ATCC BAA-916 / DSM 44818 / JCM 13857 / NBRC 105044 / CNB-440).